We begin with the raw amino-acid sequence, 340 residues long: CRISPR system Cmr subunit Cmr6 (340 aa).

Belongs to the CRISPR system Cmr6 family. Part of the type III-B Cmr ribonucleoprotein (RNP) complex, an elongated RNP with Cmr2 and Cmr3 as the base, with Cmr4 and Cmr5 forming a helical core along the mature crRNA (39 or 45 nt in length), while the complex is capped by Cmr6 and Cmr1. The 5' end of the crRNA is bound to Cmr2 and Cmr3, while Cmr6 and a Cmr1 subunit (Cmr1-1 or Cmr1-2) cap the 3' end of the crRNA. The target RNA lies antiparallel to the crRNA, with its 5' end near Cmr1 and Cmr6 and its 3' end near Cmr2 and Cmr3; major target cleavage occurs nears the junction of Cmr1/Cmr6 and Cmr4/Cmr, with minor cleavage occurring at 6 nt intervals which coincide with the proposed spacing of Cmr4 subunits. Interacts with Cmr4 and Cmr5.

Its subcellular location is the cytoplasm. Functionally, CRISPR (clustered regularly interspaced short palindromic repeat), is an adaptive immune system that provides protection against mobile genetic elements (viruses, transposable elements and conjugative plasmids). CRISPR clusters contain sequences complementary to antecedent mobile elements and target invading nucleic acids. CRISPR clusters are transcribed and processed into CRISPR RNA (crRNA), formerly called psiRNA (prokaryotic silencing) in this organism. Part of the Cmr ribonucleoprotein complex which has divalent cation-dependent endoribonuclease activity specific for ssRNA complementary to the crRNA (target RNA), generating 5' hydroxy- and 3' phosphate or 2'-3' cyclic phosphate termini. Cmr4 is probably the subunit that cleaves target RNA. Cmr complex does not cleave ssDNA complementary to the crRNA. Cleavage of invading RNA is guided by the crRNA; substrate cleavage occurs a fixed distance (14 nt) from the 3' end of the crRNA. In vitro reconstitution shows Cmr1-2 and Cmr5 are not absolutely necessary for target cleavage. The sequence is that of CRISPR system Cmr subunit Cmr6 from Pyrococcus furiosus (strain ATCC 43587 / DSM 3638 / JCM 8422 / Vc1).